We begin with the raw amino-acid sequence, 162 residues long: Nucleotide-binding protein SCO4614 (162 aa).

Belongs to the YajQ family.

It is found in the cytoplasm. Its subcellular location is the nucleoid. Functionally, nucleotide-binding protein. This is Nucleotide-binding protein SCO4614 from Streptomyces coelicolor (strain ATCC BAA-471 / A3(2) / M145).